The chain runs to 239 residues: 2,3,4,5-tetrahydropyridine-2,6-dicarboxylate N-acetyltransferase (239 aa).

It belongs to the transferase hexapeptide repeat family. DapH subfamily.

It catalyses the reaction (S)-2,3,4,5-tetrahydrodipicolinate + acetyl-CoA + H2O = L-2-acetamido-6-oxoheptanedioate + CoA. The protein operates within amino-acid biosynthesis; L-lysine biosynthesis via DAP pathway; LL-2,6-diaminopimelate from (S)-tetrahydrodipicolinate (acetylase route): step 1/3. Catalyzes the transfer of an acetyl group from acetyl-CoA to tetrahydrodipicolinate. The polypeptide is 2,3,4,5-tetrahydropyridine-2,6-dicarboxylate N-acetyltransferase (Staphylococcus aureus (strain Newman)).